The following is a 363-amino-acid chain: Serine/threonine-protein kinase SRK2A (363 aa).

The 257-residue stretch at 4 to 260 (YELVKDIGAG…IAEIKKHSWF (257 aa)) folds into the Protein kinase domain. ATP contacts are provided by residues 10–18 (IGAGNFGVA) and lysine 33. Aspartate 123 serves as the catalytic Proton acceptor. The segment at 306–363 (SRSIGGFGWGGNGDADGKEEDAEDVEEEEEEVEEEEDDEDEYDKTVKEVHASGEVRIS) is disordered. The span at 310-319 (GGFGWGGNGD) shows a compositional bias: gly residues. Residues 322 to 347 (GKEEDAEDVEEEEEEVEEEEDDEDEY) are compositionally biased toward acidic residues. Basic and acidic residues predominate over residues 348-363 (DKTVKEVHASGEVRIS).

This sequence belongs to the protein kinase superfamily. Ser/Thr protein kinase family. As to quaternary structure, interacts with TOPP1. Expressed in seedlings.

It catalyses the reaction L-seryl-[protein] + ATP = O-phospho-L-seryl-[protein] + ADP + H(+). It carries out the reaction L-threonyl-[protein] + ATP = O-phospho-L-threonyl-[protein] + ADP + H(+). This is Serine/threonine-protein kinase SRK2A (SRK2A) from Arabidopsis thaliana (Mouse-ear cress).